The following is a 623-amino-acid chain: Chaperone protein HtpG (623 aa).

Residues 1 to 326 (MAEEKRQFQA…SQDLPLNVSR (326 aa)) form an a; substrate-binding region. The interval 327 to 543 (EMLQHNPVLS…EGEMSMHLEK (217 aa)) is b. A c region spans residues 544-623 (MLRAHNQAPG…VSVMEKGLLG (80 aa)).

Belongs to the heat shock protein 90 family. In terms of assembly, homodimer.

The protein resides in the cytoplasm. Its function is as follows. Molecular chaperone. Has ATPase activity. The protein is Chaperone protein HtpG of Paramagnetospirillum magneticum (strain ATCC 700264 / AMB-1) (Magnetospirillum magneticum).